A 520-amino-acid polypeptide reads, in one-letter code: Nonsense-mediated mRNA decay factor SMG9 (520 aa).

The disordered stretch occupies residues 1–143 (MSESGHSQPG…KGEKEGQRPT (143 aa)). Ser-2 carries the post-translational modification N-acetylserine. 5 positions are modified to phosphoserine: Ser-2, Ser-4, Ser-7, Ser-32, and Ser-53. The segment covering 36–53 (GRERDYIAPWERERRDGS) has biased composition (basic and acidic residues). Residues 78–94 (QPPPPAAPAAPPAPAPL) show a composition bias toward pro residues. Over residues 109–121 (GPAATTSTSTPEG) the composition is skewed to low complexity. Residues 122-133 (TAPPPPAAPVPP) show a composition bias toward pro residues. At Ser-451 the chain carries Phosphoserine.

It belongs to the SMG9 family. In terms of assembly, self-associates to form homodimers and forms heterodimers with SMG8; these assembly forms may represent SMG1C intermediate forms. Component of the SMG1C complex composed of SMG1, SMG8 and SMG9. Self-associates to form homodimers and forms heterodimers with SMG8; these assembly forms may represent SMG1C intermediate forms. Interacts with DHX34; the interaction is RNA-independent. Post-translationally, phosphorylated by SMG1.

Functionally, involved in nonsense-mediated decay (NMD) of mRNAs containing premature stop codons. Is recruited by release factors to stalled ribosomes together with SMG1 and SMG8 (forming the SMG1C protein kinase complex) and, in the SMG1C complex, is required for the efficient association between SMG1 and SMG8. Plays a role in brain, heart, and eye development. This chain is Nonsense-mediated mRNA decay factor SMG9, found in Bos taurus (Bovine).